A 200-amino-acid chain; its full sequence is ATP-dependent Clp protease proteolytic subunit 1 (200 aa).

The Nucleophile role is filled by Ser-98. The active site involves His-123.

Belongs to the peptidase S14 family. As to quaternary structure, fourteen ClpP subunits assemble into 2 heptameric rings which stack back to back to give a disk-like structure with a central cavity, resembling the structure of eukaryotic proteasomes.

Its subcellular location is the cytoplasm. It carries out the reaction Hydrolysis of proteins to small peptides in the presence of ATP and magnesium. alpha-casein is the usual test substrate. In the absence of ATP, only oligopeptides shorter than five residues are hydrolyzed (such as succinyl-Leu-Tyr-|-NHMec, and Leu-Tyr-Leu-|-Tyr-Trp, in which cleavage of the -Tyr-|-Leu- and -Tyr-|-Trp bonds also occurs).. Cleaves peptides in various proteins in a process that requires ATP hydrolysis. Has a chymotrypsin-like activity. Plays a major role in the degradation of misfolded proteins. The protein is ATP-dependent Clp protease proteolytic subunit 1 of Mycobacterium bovis (strain ATCC BAA-935 / AF2122/97).